The following is a 32-amino-acid chain: ATP synthase subunit O, mitochondrial (32 aa).

This sequence belongs to the ATPase delta chain family. As to quaternary structure, F-type ATPases have 2 components, CF(1) - the catalytic core - and CF(0) - the membrane proton channel. CF(1) has five subunits: alpha(3), beta(3), gamma(1), delta(1), epsilon(1). CF(0) has three main subunits: a, b and c.

The protein resides in the mitochondrion. It is found in the mitochondrion inner membrane. In terms of biological role, mitochondrial membrane ATP synthase (F(1)F(0) ATP synthase or Complex V) produces ATP from ADP in the presence of a proton gradient across the membrane which is generated by electron transport complexes of the respiratory chain. F-type ATPases consist of two structural domains, F(1) - containing the extramembraneous catalytic core and F(0) - containing the membrane proton channel, linked together by a central stalk and a peripheral stalk. During catalysis, ATP synthesis in the catalytic domain of F(1) is coupled via a rotary mechanism of the central stalk subunits to proton translocation. Part of the complex F(0) domain and the peripheric stalk, which acts as a stator to hold the catalytic alpha(3)beta(3) subcomplex and subunit a/ATP6 static relative to the rotary elements. The polypeptide is ATP synthase subunit O, mitochondrial (Spinacia oleracea (Spinach)).